A 450-amino-acid chain; its full sequence is Bifunctional protein GlmU (450 aa).

The segment at 1–226 (MLAVAVLAAG…PDEVNGINNR (226 aa)) is pyrophosphorylase. UDP-N-acetyl-alpha-D-glucosamine-binding positions include 7-10 (LAAG), Lys21, Gln73, and 78-79 (GT). Asp103 provides a ligand contact to Mg(2+). Positions 140, 155, 170, and 224 each coordinate UDP-N-acetyl-alpha-D-glucosamine. Residue Asn224 coordinates Mg(2+). Positions 227–247 (KQLAQCEGVLQQRLRDYWMDE) are linker. The tract at residues 248–450 (GVTFVDPASC…TKDNWANRSI (203 aa)) is N-acetyltransferase. Residues Arg329 and Lys347 each contribute to the UDP-N-acetyl-alpha-D-glucosamine site. His359 acts as the Proton acceptor in catalysis. Positions 362 and 373 each coordinate UDP-N-acetyl-alpha-D-glucosamine. Acetyl-CoA is bound by residues Ala376, 382–383 (NY), Ala419, and Arg436.

In the N-terminal section; belongs to the N-acetylglucosamine-1-phosphate uridyltransferase family. The protein in the C-terminal section; belongs to the transferase hexapeptide repeat family. Homotrimer. It depends on Mg(2+) as a cofactor.

It is found in the cytoplasm. The catalysed reaction is alpha-D-glucosamine 1-phosphate + acetyl-CoA = N-acetyl-alpha-D-glucosamine 1-phosphate + CoA + H(+). It catalyses the reaction N-acetyl-alpha-D-glucosamine 1-phosphate + UTP + H(+) = UDP-N-acetyl-alpha-D-glucosamine + diphosphate. The protein operates within nucleotide-sugar biosynthesis; UDP-N-acetyl-alpha-D-glucosamine biosynthesis; N-acetyl-alpha-D-glucosamine 1-phosphate from alpha-D-glucosamine 6-phosphate (route II): step 2/2. Its pathway is nucleotide-sugar biosynthesis; UDP-N-acetyl-alpha-D-glucosamine biosynthesis; UDP-N-acetyl-alpha-D-glucosamine from N-acetyl-alpha-D-glucosamine 1-phosphate: step 1/1. It participates in bacterial outer membrane biogenesis; LPS lipid A biosynthesis. Its function is as follows. Catalyzes the last two sequential reactions in the de novo biosynthetic pathway for UDP-N-acetylglucosamine (UDP-GlcNAc). The C-terminal domain catalyzes the transfer of acetyl group from acetyl coenzyme A to glucosamine-1-phosphate (GlcN-1-P) to produce N-acetylglucosamine-1-phosphate (GlcNAc-1-P), which is converted into UDP-GlcNAc by the transfer of uridine 5-monophosphate (from uridine 5-triphosphate), a reaction catalyzed by the N-terminal domain. This is Bifunctional protein GlmU from Synechococcus sp. (strain CC9902).